An 810-amino-acid chain; its full sequence is Eukaryotic translation initiation factor 3 subunit C (810 aa).

Residues 1–11 (MSRFFATNYNY) are compositionally biased toward polar residues. Residues 1-98 (MSRFFATNYN…DSDESDEEDG (98 aa)) are disordered. Residues 12–33 (DETSSSSEEDLLSSSEELLSSS) show a composition bias toward low complexity. Residues 34–58 (EEGELSDDSLFNDESESESDFDSDD) show a composition bias toward acidic residues. The region spanning 605-780 (YHQHINLDLV…TYIVIEKGDE (176 aa)) is the PCI domain.

Belongs to the eIF-3 subunit C family. In terms of assembly, component of the eukaryotic translation initiation factor 3 (eIF-3) complex.

The protein localises to the cytoplasm. Functionally, component of the eukaryotic translation initiation factor 3 (eIF-3) complex, which is involved in protein synthesis of a specialized repertoire of mRNAs and, together with other initiation factors, stimulates binding of mRNA and methionyl-tRNAi to the 40S ribosome. The eIF-3 complex specifically targets and initiates translation of a subset of mRNAs involved in cell proliferation. The chain is Eukaryotic translation initiation factor 3 subunit C from Candida glabrata (strain ATCC 2001 / BCRC 20586 / JCM 3761 / NBRC 0622 / NRRL Y-65 / CBS 138) (Yeast).